We begin with the raw amino-acid sequence, 159 residues long: Ribosomal RNA large subunit methyltransferase H (159 aa).

Residues leucine 76, glycine 108, and 127 to 132 each bind S-adenosyl-L-methionine; that span reads FSKMTL.

The protein belongs to the RNA methyltransferase RlmH family. In terms of assembly, homodimer.

Its subcellular location is the cytoplasm. It catalyses the reaction pseudouridine(1915) in 23S rRNA + S-adenosyl-L-methionine = N(3)-methylpseudouridine(1915) in 23S rRNA + S-adenosyl-L-homocysteine + H(+). In terms of biological role, specifically methylates the pseudouridine at position 1915 (m3Psi1915) in 23S rRNA. This chain is Ribosomal RNA large subunit methyltransferase H, found in Bacillus thuringiensis subsp. konkukian (strain 97-27).